Consider the following 394-residue polypeptide: Cysteine protease ATG4B (394 aa).

Cys-74 functions as the Nucleophile in the catalytic mechanism. Active-site residues include Asp-280 and His-282. The LIR motif lies at 389–392 (FEIL).

This sequence belongs to the peptidase C54 family.

It is found in the cytoplasm. The protein resides in the cytosol. The protein localises to the cytoplasmic vesicle. Its subcellular location is the autophagosome. It localises to the endoplasmic reticulum. It is found in the mitochondrion. It catalyses the reaction [protein]-C-terminal L-amino acid-glycyl-phosphatidylethanolamide + H2O = [protein]-C-terminal L-amino acid-glycine + a 1,2-diacyl-sn-glycero-3-phosphoethanolamine. The enzyme catalyses [protein]-C-terminal L-amino acid-glycyl-phosphatidylserine + H2O = [protein]-C-terminal L-amino acid-glycine + a 1,2-diacyl-sn-glycero-3-phospho-L-serine. Its function is as follows. Cysteine protease that plays a key role in autophagy by mediating both proteolytic activation and delipidation of ATG8 family proteins. Required for canonical autophagy (macroautophagy), non-canonical autophagy as well as for mitophagy. The protease activity is required for proteolytic activation of ATG8 family proteins: cleaves the C-terminal amino acid of ATG8 proteins to reveal a C-terminal glycine. Exposure of the glycine at the C-terminus is essential for ATG8 proteins conjugation to phosphatidylethanolamine (PE) and insertion to membranes, which is necessary for autophagy. Protease activity is also required to counteract formation of high-molecular weight conjugates of ATG8 proteins (ATG8ylation): acts as a deubiquitinating-like enzyme that removes ATG8 conjugated to other proteins, such as ATG3. In addition to the protease activity, also mediates delipidation of ATG8 family proteins. Catalyzes delipidation of PE-conjugated forms of ATG8 proteins during macroautophagy. Also involved in non-canonical autophagy, a parallel pathway involving conjugation of ATG8 proteins to single membranes at endolysosomal compartments, by catalyzing delipidation of ATG8 proteins conjugated to phosphatidylserine (PS). The sequence is that of Cysteine protease ATG4B from Danio rerio (Zebrafish).